We begin with the raw amino-acid sequence, 293 residues long: MPSLKDLKNRIASVKATQKITKAMKMVAAAKLRRAQEAAEAARPYSQRMGAVLANIAQAVGSDDGVSTLMTGTGKDDVHLLVVCTAERGLCGGFNSQISRFARDHVRSLLAAGKTVKIYCVGKKGYDSLRREFGALIVERTEFREVKRVAFENADTVARKVISMFDKGEFDVCTLFYSEFKSVISQIPTARQLIPAAVGDAPAASSSAAAIYDYEPDAASILSDLIPRNIAVQIFRALLENAAGEMGAKMSAMDNATRNAGEMINKLTLSYNRQRQAKITTELIEIIAGAEAL.

This sequence belongs to the ATPase gamma chain family. In terms of assembly, F-type ATPases have 2 components, CF(1) - the catalytic core - and CF(0) - the membrane proton channel. CF(1) has five subunits: alpha(3), beta(3), gamma(1), delta(1), epsilon(1). CF(0) has three main subunits: a, b and c.

The protein localises to the cell inner membrane. Produces ATP from ADP in the presence of a proton gradient across the membrane. The gamma chain is believed to be important in regulating ATPase activity and the flow of protons through the CF(0) complex. The protein is ATP synthase gamma chain of Allorhizobium ampelinum (strain ATCC BAA-846 / DSM 112012 / S4) (Agrobacterium vitis (strain S4)).